The primary structure comprises 526 residues: Cytochrome P450 monooxygenase COX2 (526 aa).

N-linked (GlcNAc...) asparagine glycosylation is present at N11. A helical membrane pass occupies residues 12 to 31; that stretch reads ITTNHVAAAVCAGIAVYAIV. N302 carries N-linked (GlcNAc...) asparagine glycosylation. C450 is a heme binding site.

Belongs to the cytochrome P450 family. Heme serves as cofactor.

The protein localises to the membrane. Its pathway is secondary metabolite biosynthesis. In terms of biological role, cytochrome P450 monooxygenase; part of the gene cluster that mediates the biosynthesis of alpha-cuprenene and oxidized derivatives. The alpha-cuprenene synthase COP6 is the only sesquiterpene synthase identified in C.cinereus that appears to be part of a biosynthetic gene cluster and is highly specific since it catalyzes the cyclization of (2E,6E)-farnesyl diphosphate into only one product, alpha-cuprenene. The cytochrome P450 monooxygenase COX2 then oxidizes the cyclohexadiene ring of alpha-cuprenene at positions 1 and 4, yielding first alpha-cuparene, followed by alpha-cuparophenol and a further yet unidentified compound resulting from one additional oxidation step. The cytochrome P450 monooxygenase COX1 then likely catalyzes the oxidation at position 9 of the pentane ring of alpha-cuprenene to give the corresponding hydroxy or ketone derivatives. This chain is Cytochrome P450 monooxygenase COX2, found in Coprinopsis cinerea (strain Okayama-7 / 130 / ATCC MYA-4618 / FGSC 9003) (Inky cap fungus).